The primary structure comprises 298 residues: Keratin-associated protein 10-11 (298 aa).

Tandem repeats lie at residues 26 to 30, 36 to 40, 57 to 61, 79 to 83, 89 to 93, 99 to 103, 104 to 108, 109 to 113, 114 to 118, 119 to 123, 126 to 130, 136 to 140, 146 to 150, 151 to 155, 156 to 160, 168 to 172, 178 to 182, 188 to 192, 193 to 197, 203 to 207, 225 to 229, 230 to 234, 249 to 253, 256 to 260, and 267 to 271. Residues 26-271 are 25 X 5 AA repeats of C-C-X(3); the sequence is CCEPPCSAPS…SCQSSCCRPA (246 aa).

Belongs to the KRTAP type 10 family. In terms of assembly, interacts with hair keratins. In terms of tissue distribution, restricted to a narrow region of the hair fiber cuticle, lying approximately 20 cell layers above the apex of the dermal papilla of the hair root; not detected in any other tissues.

Its function is as follows. In the hair cortex, hair keratin intermediate filaments are embedded in an interfilamentous matrix, consisting of hair keratin-associated proteins (KRTAP), which are essential for the formation of a rigid and resistant hair shaft through their extensive disulfide bond cross-linking with abundant cysteine residues of hair keratins. The matrix proteins include the high-sulfur and high-glycine-tyrosine keratins. This chain is Keratin-associated protein 10-11 (KRTAP10-11), found in Homo sapiens (Human).